We begin with the raw amino-acid sequence, 248 residues long: 1-(5-phosphoribosyl)-5-[(5-phosphoribosylamino)methylideneamino] imidazole-4-carboxamide isomerase (248 aa).

The active-site Proton acceptor is the Asp11. Asp132 serves as the catalytic Proton donor.

Belongs to the HisA/HisF family.

The protein resides in the cytoplasm. The catalysed reaction is 1-(5-phospho-beta-D-ribosyl)-5-[(5-phospho-beta-D-ribosylamino)methylideneamino]imidazole-4-carboxamide = 5-[(5-phospho-1-deoxy-D-ribulos-1-ylimino)methylamino]-1-(5-phospho-beta-D-ribosyl)imidazole-4-carboxamide. Its pathway is amino-acid biosynthesis; L-histidine biosynthesis; L-histidine from 5-phospho-alpha-D-ribose 1-diphosphate: step 4/9. In Bradyrhizobium diazoefficiens (strain JCM 10833 / BCRC 13528 / IAM 13628 / NBRC 14792 / USDA 110), this protein is 1-(5-phosphoribosyl)-5-[(5-phosphoribosylamino)methylideneamino] imidazole-4-carboxamide isomerase.